We begin with the raw amino-acid sequence, 351 residues long: Anthranilate phosphoribosyltransferase (351 aa).

Residues Gly80, 83–84 (GD), Thr88, 90–93 (NIST), 108–116 (KHGNRSITS), and Ser120 contribute to the 5-phospho-alpha-D-ribose 1-diphosphate site. Gly80 lines the anthranilate pocket. Ser92 provides a ligand contact to Mg(2+). Asn111 contributes to the anthranilate binding site. Arg166 contacts anthranilate. Residues Asp229 and Glu230 each coordinate Mg(2+).

It belongs to the anthranilate phosphoribosyltransferase family. As to quaternary structure, homodimer. Mg(2+) serves as cofactor.

It catalyses the reaction N-(5-phospho-beta-D-ribosyl)anthranilate + diphosphate = 5-phospho-alpha-D-ribose 1-diphosphate + anthranilate. Its pathway is amino-acid biosynthesis; L-tryptophan biosynthesis; L-tryptophan from chorismate: step 2/5. Functionally, catalyzes the transfer of the phosphoribosyl group of 5-phosphorylribose-1-pyrophosphate (PRPP) to anthranilate to yield N-(5'-phosphoribosyl)-anthranilate (PRA). The sequence is that of Anthranilate phosphoribosyltransferase from Chlorobaculum parvum (strain DSM 263 / NCIMB 8327) (Chlorobium vibrioforme subsp. thiosulfatophilum).